The chain runs to 483 residues: General transcription factor IIH subunit 4 (483 aa).

A disordered region spans residues 93–117 (PQQQQSSQQSSSQQQQQQQQQQQQT). Positions 94–116 (QQQQSSQQSSSQQQQQQQQQQQQ) are enriched in low complexity.

The protein belongs to the TFB2 family. Component of the 7-subunit TFIIH core complex composed of XPB/repB, XPD/repD, gtf2h1, gtf2h2, gtf2h3, gtf2h4 and gtf2h5, which is active in NER. The core complex associates with the 3-subunit CDK-activating kinase (CAK) module composed of cycH/cyclin H, cdk7 and mnat1 to form the 10-subunit holoenzyme (holo-TFIIH) active in transcription.

The protein localises to the nucleus. Functionally, component of the general transcription and DNA repair factor IIH (TFIIH) core complex, which is involved in general and transcription-coupled nucleotide excision repair (NER) of damaged DNA and, when complexed to CAK, in RNA transcription by RNA polymerase II. In NER, TFIIH acts by opening DNA around the lesion to allow the excision of the damaged oligonucleotide and its replacement by a new DNA fragment. In transcription, TFIIH has an essential role in transcription initiation. When the pre-initiation complex (PIC) has been established, TFIIH is required for promoter opening and promoter escape. Phosphorylation of the C-terminal tail (CTD) of the largest subunit of RNA polymerase II by the kinase module CAK controls the initiation of transcription. The sequence is that of General transcription factor IIH subunit 4 (gtf2h4) from Dictyostelium discoideum (Social amoeba).